An 81-amino-acid chain; its full sequence is RNA-binding protein Hfq (81 aa).

In terms of domain architecture, Sm spans 11 to 71 (DIFLNSARKN…VSTITPLRPI (61 aa)).

It belongs to the Hfq family. Homohexamer.

RNA chaperone that binds small regulatory RNA (sRNAs) and mRNAs to facilitate mRNA translational regulation in response to envelope stress, environmental stress and changes in metabolite concentrations. Also binds with high specificity to tRNAs. In Clostridium acetobutylicum (strain ATCC 824 / DSM 792 / JCM 1419 / IAM 19013 / LMG 5710 / NBRC 13948 / NRRL B-527 / VKM B-1787 / 2291 / W), this protein is RNA-binding protein Hfq.